The following is a 740-amino-acid chain: Catalase-peroxidase (740 aa).

Residues 107–229 (WHAAGTYRIH…LAAVQMGLIY (123 aa)) constitute a cross-link (tryptophyl-tyrosyl-methioninium (Trp-Tyr) (with M-255)). H108 acts as the Proton acceptor in catalysis. The segment at residues 229 to 255 (YVNPEGPNGNPDPMAAAVDIRETFRRM) is a cross-link (tryptophyl-tyrosyl-methioninium (Tyr-Met) (with W-107)). Heme b is bound at residue H270.

This sequence belongs to the peroxidase family. Peroxidase/catalase subfamily. Homodimer. It depends on heme b as a cofactor. Formation of the three residue Trp-Tyr-Met cross-link is important for the catalase, but not the peroxidase activity of the enzyme.

The enzyme catalyses H2O2 + AH2 = A + 2 H2O. It carries out the reaction 2 H2O2 = O2 + 2 H2O. Its function is as follows. Bifunctional enzyme with both catalase and broad-spectrum peroxidase activity. May play a role in the intracellular survival of mycobacteria. The chain is Catalase-peroxidase from Mycobacterium bovis (strain ATCC BAA-935 / AF2122/97).